A 741-amino-acid polypeptide reads, in one-letter code: Catalase-peroxidase (741 aa).

Residues W86 to Y208 constitute a cross-link (tryptophyl-tyrosyl-methioninium (Trp-Tyr) (with M-234)). H87 (proton acceptor) is an active-site residue. Positions Y208–M234 form a cross-link, tryptophyl-tyrosyl-methioninium (Tyr-Met) (with W-86). H249 provides a ligand contact to heme b.

The protein belongs to the peroxidase family. Peroxidase/catalase subfamily. As to quaternary structure, homodimer or homotetramer. Requires heme b as cofactor. Post-translationally, formation of the three residue Trp-Tyr-Met cross-link is important for the catalase, but not the peroxidase activity of the enzyme.

The catalysed reaction is H2O2 + AH2 = A + 2 H2O. It catalyses the reaction 2 H2O2 = O2 + 2 H2O. Bifunctional enzyme with both catalase and broad-spectrum peroxidase activity. Also displays NADH oxidase, INH lyase and isonicotinoyl-NAD synthase activities. This chain is Catalase-peroxidase, found in Archaeoglobus fulgidus (strain ATCC 49558 / DSM 4304 / JCM 9628 / NBRC 100126 / VC-16).